A 312-amino-acid chain; its full sequence is Protein-methionine-sulfoxide reductase catalytic subunit MsrP (312 aa).

Positions 1 to 42 form a signal peptide, tat-type signal; it reads MALFRYPRPLPSEITPRDMYLSRRSLIGGAAALGAVSATADA. Residues asparagine 68, 71–72, cysteine 126, serine 161, asparagine 211, arginine 216, and 227–229 contribute to the Mo-molybdopterin site; these read YE and GIK.

This sequence belongs to the MsrP family. As to quaternary structure, heterodimer of a catalytic subunit (MsrP) and a heme-binding subunit (MsrQ). Mo-molybdopterin serves as cofactor. Predicted to be exported by the Tat system. The position of the signal peptide cleavage has not been experimentally proven.

It localises to the periplasm. It catalyses the reaction L-methionyl-[protein] + a quinone + H2O = L-methionyl-(S)-S-oxide-[protein] + a quinol. It carries out the reaction L-methionyl-[protein] + a quinone + H2O = L-methionyl-(R)-S-oxide-[protein] + a quinol. Functionally, part of the MsrPQ system that repairs oxidized periplasmic proteins containing methionine sulfoxide residues (Met-O), using respiratory chain electrons. Thus protects these proteins from oxidative-stress damage caused by reactive species of oxygen and chlorine generated by the host defense mechanisms. MsrPQ is essential for the maintenance of envelope integrity under bleach stress, rescuing a wide series of structurally unrelated periplasmic proteins from methionine oxidation. The catalytic subunit MsrP is non-stereospecific, being able to reduce both (R-) and (S-) diastereoisomers of methionine sulfoxide. This is Protein-methionine-sulfoxide reductase catalytic subunit MsrP from Gluconobacter oxydans (strain 621H) (Gluconobacter suboxydans).